Here is a 301-residue protein sequence, read N- to C-terminus: Polyamine aminopropyltransferase (301 aa).

The region spanning 4-240 (WHWLLEWQTP…GLWGFVYGGV (237 aa)) is the PABS domain. Gln-33 is an S-methyl-5'-thioadenosine binding site. Spermidine contacts are provided by His-64 and Glu-89. Residues Asp-109 and 141 to 142 (DG) each bind S-methyl-5'-thioadenosine. Asp-159 (proton acceptor) is an active-site residue.

The protein belongs to the spermidine/spermine synthase family. Homodimer or homotetramer.

It localises to the cytoplasm. The catalysed reaction is S-adenosyl 3-(methylsulfanyl)propylamine + putrescine = S-methyl-5'-thioadenosine + spermidine + H(+). It participates in amine and polyamine biosynthesis; spermidine biosynthesis; spermidine from putrescine: step 1/1. Its function is as follows. Catalyzes the irreversible transfer of a propylamine group from the amino donor S-adenosylmethioninamine (decarboxy-AdoMet) to putrescine (1,4-diaminobutane) to yield spermidine. This Saccharolobus islandicus (strain Y.N.15.51 / Yellowstone #2) (Sulfolobus islandicus) protein is Polyamine aminopropyltransferase.